Consider the following 732-residue polypeptide: Protein FAR1-RELATED SEQUENCE 4 (732 aa).

An FAR1 domain is found at 11–97; that stretch reads LFYKDYAKSV…VKEHNHDLLP (87 aa). The region spanning 212–308 is the MULE domain; the sequence is VVSFETSYFV…CLWHVLDQLP (97 aa). An SWIM-type zinc finger spans residues 490–526; sequence YLVDWDEFKSDIYCSCRSFEYKGYLCRHAIVVLQMSG. Residues 623 to 683 are disordered; it reads QEENQYGSTS…ETVGEGSQEG (61 aa). The segment covering 624–635 has biased composition (polar residues); that stretch reads EENQYGSTSTQI.

It belongs to the FHY3/FAR1 family. In terms of tissue distribution, expressed in hypocotyls, rosette and cauline leaves, inflorescences stems, flowers and siliques.

It is found in the nucleus. In terms of biological role, putative transcription activator involved in regulating light control of development. The sequence is that of Protein FAR1-RELATED SEQUENCE 4 (FRS4) from Arabidopsis thaliana (Mouse-ear cress).